A 158-amino-acid chain; its full sequence is Dysbindin domain-containing protein 2 (158 aa).

The interval F79 to S158 is disordered. Over residues P106–S131 the composition is skewed to low complexity. Phosphoserine is present on residues S119 and S120. Phosphothreonine is present on T137. At S142 the chain carries Phosphoserine. Acidic residues predominate over residues S142 to G151.

This sequence belongs to the dysbindin family. Monomer. Interacts with CSNK1D and CSNK1E.

In terms of biological role, may modulate the activity of casein kinase-1. Inhibits CSNK1D autophosphorylation (in vitro). The chain is Dysbindin domain-containing protein 2 (Dbndd2) from Mus musculus (Mouse).